A 635-amino-acid chain; its full sequence is Threonine--tRNA ligase (635 aa).

Residues 1-61 (MPVIRLPDGS…TDDADLSIIT (61 aa)) enclose the TGS domain. The catalytic stretch occupies residues 242-533 (DHRKLGRQLD…LIENYAGAMP (292 aa)). C333, H384, and H510 together coordinate Zn(2+).

The protein belongs to the class-II aminoacyl-tRNA synthetase family. Homodimer. It depends on Zn(2+) as a cofactor.

Its subcellular location is the cytoplasm. It carries out the reaction tRNA(Thr) + L-threonine + ATP = L-threonyl-tRNA(Thr) + AMP + diphosphate + H(+). Catalyzes the attachment of threonine to tRNA(Thr) in a two-step reaction: L-threonine is first activated by ATP to form Thr-AMP and then transferred to the acceptor end of tRNA(Thr). Also edits incorrectly charged L-seryl-tRNA(Thr). The polypeptide is Threonine--tRNA ligase (Methylobacillus flagellatus (strain ATCC 51484 / DSM 6875 / VKM B-1610 / KT)).